The sequence spans 1266 residues: SUMO-interacting motif-containing protein 1 (1266 aa).

Residues M1–P35 form a disordered region. Positions G22–L31 are enriched in basic residues. Positions F45–T49 match the SUMO interaction motif 1 (SIM); mediates the binding to polysumoylated substrates motif. The SUMO interaction motif 2 (SIM); mediates the binding to polysumoylated substrates signature appears at V64–T68. Composition is skewed to low complexity over residues S183 to N197 and S532 to S553. Disordered regions lie at residues S183 to Q206, S532 to V732, N756 to A812, and L1024 to N1052. A compositionally biased stretch (polar residues) spans S560–V571. Over residues S764–S777 the composition is skewed to low complexity. Residues Q779–R1266 form an interaction with SLF2 region. Residues S857–R1266 form a required for inhibition of CAPN3 protease activity region. An NSE5-like domain region spans residues I865–R1200.

As to quaternary structure, forms a heterodimer with SLF2. Interacts (via SIM domains) with SUMO1 and SUMO2. Interacts with CAPN3 and CTBP1. Interacts with SMC6 and ZNF451.

It localises to the nucleus. Its subcellular location is the PML body. In terms of biological role, inhibits the protease activity of CAPN3. May play a role in SMC5-SMC6 complex recruitment for viral restriction. Forms a complex with SLF2 and this complex is required to recruit SMC5-SMC6 complex to PML nuclear bodies and sites of viral replication. In Rattus norvegicus (Rat), this protein is SUMO-interacting motif-containing protein 1 (Simc1).